A 727-amino-acid chain; its full sequence is MPRRKKKIKEASESQNLEKKDLETSSCVSIKKKRRLEDLLIVISDSDGEETKEENGLQKTKTKQSNRSKCLAKRKVAHMSEEEQFALALKMSEQEAREVNNQEEKEEELLRKAIAESLNSCWSSAASATRSRPLAAELSSHSHQENTKDSGTTEGVWQLVPPSLCKGSHVSQGNEAEQRKEPWDHNENTEEEPVSGSSGSWDQSSQPVFENENVKCFDRCTGHLAEHTQCGKPQESTGSGYAFSKAVQGRGDTSRQCLPIPADTKGLQDTGGTVHYYWGIPFCPAGVDPNQYTNVILCQLEVYQKSLKMAQRQLVKKRGFGEPVLPRPPFLIQNECGQEDQTSDKNEGISEDMGDEAKEERQESRASVWHSETKDFQKSPIKSLKQKLLLEEEPTTSRGQSSQGLFVEETSEEGLKSSEGDNSVPTTQSIAALTSKRSLVLMPESSAEEITVCPETQLSFLEPLDLNREDSPDSRELPIEVRMAVGDKQVANREDCMKENPPPAVSSSTRVSCPLCNQDFPPTKIEQHAMYCNGLMEQETVLTRRRREAKNKSDGRTAAQPALDANRKEKCYLCKSLVPLGEYQCHVEACLQLAKVDREDGIEGTRRPRVCAPVEGKQQQRLKKSKDKGHSQGRLLSLLEQSEHRTTGVEKKPKYSEVRTFRMPSPEVEEASCSREMQSTLSQLNLNESPIKSFVPVSEATNCLVDFKEQFAFRSRTKSGRGRRRKS.

Positions 1–23 are disordered; sequence MPRRKKKIKEASESQNLEKKDLE. The necessary for transcriptional repression stretch occupies residues 1 to 101; sequence MPRRKKKIKE…SEQEAREVNN (101 aa). The segment covering 9–23 has biased composition (basic and acidic residues); the sequence is KEASESQNLEKKDLE. Residue Lys-20 forms a Glycyl lysine isopeptide (Lys-Gly) (interchain with G-Cter in SUMO2) linkage. A Phosphoserine modification is found at Ser-29. Lys-31 participates in a covalent cross-link: Glycyl lysine isopeptide (Lys-Gly) (interchain with G-Cter in SUMO2). Ser-44 and Ser-46 each carry phosphoserine. The interval 45-70 is disordered; sequence DSDGEETKEENGLQKTKTKQSNRSKC. Thr-51 carries the phosphothreonine modification. Basic residues predominate over residues 60-70; that stretch reads TKTKQSNRSKC. The LR motif motif lies at 60–78; sequence TKTKQSNRSKCLAKRKVAH. Residues Lys-75 and Lys-90 each participate in a glycyl lysine isopeptide (Lys-Gly) (interchain with G-Cter in SUMO2) cross-link. 2 consecutive UIM domains span residues 80–99 and 104–124; these read SEEE…AREV and EKEE…CWSS. Residues 97-103 form a UIM-linker region; that stretch reads REVNNQE. Residues 100-200 are necessary for interaction with NR6A1 N-terminus; the sequence is NNQEEKEEEL…EEPVSGSSGS (101 aa). Residues 133–206 are disordered; the sequence is PLAAELSSHS…SSGSWDQSSQ (74 aa). The residue at position 140 (Ser-140) is a Phosphoserine. A compositionally biased stretch (basic and acidic residues) spans 176–188; that stretch reads AEQRKEPWDHNEN. Low complexity predominate over residues 195 to 206; the sequence is SGSSGSWDQSSQ. Ser-205 bears the Phosphoserine mark. Lys-245 is covalently cross-linked (Glycyl lysine isopeptide (Lys-Gly) (interchain with G-Cter in SUMO2)). The interval 270–400 is AIR; it reads TGGTVHYYWG…EEEPTTSRGQ (131 aa). The segment at 326–427 is disordered; it reads PRPPFLIQNE…SEGDNSVPTT (102 aa). Positions 355 to 364 are enriched in basic and acidic residues; the sequence is DEAKEERQES. Ser-379 bears the Phosphoserine mark. Glycyl lysine isopeptide (Lys-Gly) (interchain with G-Cter in SUMO2) cross-links involve residues Lys-382 and Lys-387. The necessary for interaction with NR6A1 C-terminus stretch occupies residues 400–508; it reads QSSQGLFVEE…ENPPPAVSSS (109 aa). Ser-402 is modified (phosphoserine). A Glycyl lysine isopeptide (Lys-Gly) (interchain with G-Cter in SUMO2) cross-link involves residue Lys-436. Ser-474 is subject to Phosphoserine. The segment at 510–537 adopts a UBZ4-type zinc-finger fold; that stretch reads RVSCPLCNQDFPPTKIEQHAMYCNGLME. Cys-513, Cys-516, His-528, and Cys-532 together coordinate Zn(2+). The interval 513–590 is zinc-finger-like region; that stretch reads CPLCNQDFPP…GEYQCHVEAC (78 aa). Glycyl lysine isopeptide (Lys-Gly) (interchain with G-Cter in SUMO2) cross-links involve residues Lys-552, Lys-570, Lys-595, and Lys-617. The segment at 607–654 is disordered; it reads RPRVCAPVEGKQQQRLKKSKDKGHSQGRLLSLLEQSEHRTTGVEKKPK. Ser-637 is modified (phosphoserine). The span at 641–654 shows a compositional bias: basic and acidic residues; the sequence is QSEHRTTGVEKKPK. A Glycyl lysine isopeptide (Lys-Gly) (interchain with G-Cter in SUMO2) cross-link involves residue Lys-652. Phosphoserine is present on residues Ser-665 and Ser-689. Lys-708 participates in a covalent cross-link: Glycyl lysine isopeptide (Lys-Gly) (interchain with G-Cter in SUMO2).

The protein belongs to the RAP80 family. Component of the ARISC complex, at least composed of UIMC1/RAP80, ABRAXAS1, BRCC3/BRCC36, BABAM2 and BABAM1/NBA1. Component of the BRCA1-A complex, at least composed of the BRCA1, BARD1, UIMC1/RAP80, ABRAXAS1, BRCC3/BRCC36, BABAM2 and BABAM1/NBA1. In the BRCA1-A complex, interacts directly with ABRAXAS1. Interacts with ESR1. Interacts with UBE2I. Interacts with NR6A1. Interacts with TSP57. Interacts with TRAIP. Post-translationally, sumoylated. Phosphorylated upon DNA damage by ATM or ATR.

Its subcellular location is the nucleus. Its function is as follows. Ubiquitin-binding protein. Specifically recognizes and binds 'Lys-63'-linked ubiquitin. Plays a central role in the BRCA1-A complex by specifically binding 'Lys-63'-linked ubiquitinated histones H2A and H2AX at DNA lesions sites, leading to target the BRCA1-BARD1 heterodimer to sites of DNA damage at double-strand breaks (DSBs). The BRCA1-A complex also possesses deubiquitinase activity that specifically removes 'Lys-63'-linked ubiquitin on histones H2A and H2AX. Also weakly binds monoubiquitin but with much less affinity than 'Lys-63'-linked ubiquitin. May interact with monoubiquitinated histones H2A and H2B; the relevance of such results is however unclear in vivo. Does not bind Lys-48'-linked ubiquitin. May indirectly act as a transcriptional repressor by inhibiting the interaction of NR6A1 with the corepressor NCOR1. The polypeptide is BRCA1-A complex subunit RAP80 (Uimc1) (Mus musculus (Mouse)).